The chain runs to 658 residues: Aspartate--tRNA ligase, mitochondrial (658 aa).

E198 lines the L-aspartate pocket. Residues Q226–K229 form an aspartate region. R248 contributes to the L-aspartate binding site. ATP contacts are provided by residues R248–E250 and E553. R560 contacts L-aspartate. G604–R607 serves as a coordination point for ATP.

The protein belongs to the class-II aminoacyl-tRNA synthetase family. Type 1 subfamily.

Its subcellular location is the mitochondrion matrix. The catalysed reaction is tRNA(Asp) + L-aspartate + ATP = L-aspartyl-tRNA(Asp) + AMP + diphosphate. Catalyzes the attachment of aspartate to tRNA(Asp) in the mitochondrion. In Saccharomyces cerevisiae (strain ATCC 204508 / S288c) (Baker's yeast), this protein is Aspartate--tRNA ligase, mitochondrial (MSD1).